A 442-amino-acid chain; its full sequence is Chromosomal replication initiator protein DnaA (442 aa).

Residues 1–69 are domain I, interacts with DnaA modulators; sequence METLWDGILS…AQAGEQVIGR (69 aa). Positions 69 to 103 are domain II; the sequence is RPIQVDFIVSEQSEEALKPVIEREPAPAAPPANVA. The tract at residues 104 to 320 is domain III, AAA+ region; that stretch reads SLNSKYTFSR…GALIRAVAYV (217 aa). G148, G150, K151, and T152 together coordinate ATP. Positions 321–442 are domain IV, binds dsDNA; that stretch reads SISGLPMTVE…GNRLEADARH (122 aa).

The protein belongs to the DnaA family. Oligomerizes as a right-handed, spiral filament on DNA at oriC.

Its subcellular location is the cytoplasm. In terms of biological role, plays an essential role in the initiation and regulation of chromosomal replication. ATP-DnaA binds to the origin of replication (oriC) to initiate formation of the DNA replication initiation complex once per cell cycle. Binds the DnaA box (a 9 base pair repeat at the origin) and separates the double-stranded (ds)DNA. Forms a right-handed helical filament on oriC DNA; dsDNA binds to the exterior of the filament while single-stranded (ss)DNA is stabiized in the filament's interior. The ATP-DnaA-oriC complex binds and stabilizes one strand of the AT-rich DNA unwinding element (DUE), permitting loading of DNA polymerase. After initiation quickly degrades to an ADP-DnaA complex that is not apt for DNA replication. Binds acidic phospholipids. This chain is Chromosomal replication initiator protein DnaA, found in Gloeobacter violaceus (strain ATCC 29082 / PCC 7421).